A 498-amino-acid polypeptide reads, in one-letter code: Cytochrome P450 71B5 (498 aa).

Residues 3–23 traverse the membrane as a helical segment; sequence IFLCFLLLLPLSLIFLKKLLP. Heme is bound at residue cysteine 439.

This sequence belongs to the cytochrome P450 family. Heme is required as a cofactor.

It is found in the membrane. This chain is Cytochrome P450 71B5 (CYP71B5), found in Arabidopsis thaliana (Mouse-ear cress).